The following is a 310-amino-acid chain: Thioredoxin reductase (310 aa).

Residue 34–41 (NGMQPGGQ) participates in FAD binding. An intrachain disulfide couples C135 to C138. FAD is bound at residue 281–290 (DVQDKIYRQA).

This sequence belongs to the class-II pyridine nucleotide-disulfide oxidoreductase family. In terms of assembly, homodimer. Requires FAD as cofactor.

The protein localises to the cytoplasm. The catalysed reaction is [thioredoxin]-dithiol + NADP(+) = [thioredoxin]-disulfide + NADPH + H(+). The protein is Thioredoxin reductase (trxB) of Rickettsia conorii (strain ATCC VR-613 / Malish 7).